The primary structure comprises 619 residues: Chaperone protein DnaK (619 aa).

Residue Thr-175 is modified to Phosphothreonine; by autocatalysis. A disordered region spans residues 578 to 619 (NGGAQGQGFDPNNMGGANAGAGATNNNDDNVVDADFEVQDDK). Residues 589 to 606 (NNMGGANAGAGATNNNDD) are compositionally biased toward low complexity. The segment covering 607-619 (NVVDADFEVQDDK) has biased composition (acidic residues).

The protein belongs to the heat shock protein 70 family.

Acts as a chaperone. This is Chaperone protein DnaK from Clostridium perfringens (strain ATCC 13124 / DSM 756 / JCM 1290 / NCIMB 6125 / NCTC 8237 / Type A).